The primary structure comprises 190 residues: Segregation and condensation protein B (190 aa).

It belongs to the ScpB family. In terms of assembly, homodimer. Homodimerization may be required to stabilize the binding of ScpA to the Smc head domains. Component of a cohesin-like complex composed of ScpA, ScpB and the Smc homodimer, in which ScpA and ScpB bind to the head domain of Smc. The presence of the three proteins is required for the association of the complex with DNA.

The protein localises to the cytoplasm. Participates in chromosomal partition during cell division. May act via the formation of a condensin-like complex containing Smc and ScpA that pull DNA away from mid-cell into both cell halves. The polypeptide is Segregation and condensation protein B (Bacillus mycoides (strain KBAB4) (Bacillus weihenstephanensis)).